Reading from the N-terminus, the 77-residue chain is Conotoxin ArMKLT2-022 (77 aa).

A signal peptide spans 1 to 22 (MKLTCVLIVAVLFLTACQLIAA). Residues 23–46 (DDSRDLKRFSRRKMRDGMLNTKNT) constitute a propeptide that is removed on maturation. Gln-49 bears the Pyrrolidone carboxylic acid mark. 3 cysteine pairs are disulfide-bonded: Cys-50-Cys-65, Cys-57-Cys-68, and Cys-64-Cys-73.

It belongs to the conotoxin O1 superfamily. In terms of tissue distribution, expressed by the venom duct.

It localises to the secreted. This is Conotoxin ArMKLT2-022 from Conus arenatus (Sand-dusted cone).